A 227-amino-acid chain; its full sequence is Lectin (227 aa).

The first 28 residues, 1 to 28 (MTMTSTTTKAMAMAAAVLAAAAVAATNA), serve as a signal peptide directing secretion. Gln29 bears the Pyrrolidone carboxylic acid mark. Chitin-binding type-1 domains follow at residues 29-70 (QTCG…ACCS), 71-113 (SQRC…PCRA), 114-156 (DIKC…ACCP), and 157-199 (EKRC…GCYK). 16 disulfides stabilise this stretch: Cys31-Cys46, Cys40-Cys52, Cys45-Cys59, Cys63-Cys68, Cys74-Cys89, Cys83-Cys95, Cys88-Cys102, Cys106-Cys111, Cys117-Cys132, Cys126-Cys138, Cys131-Cys145, Cys149-Cys154, Cys160-Cys175, Cys169-Cys181, Cys174-Cys188, and Cys192-Cys197. A substrate-binding site is contributed by 38-40 (MIC). 90–101 (SQYGYCGFGSEY) serves as a coordination point for substrate. 142–143 (SE) contacts substrate. The propeptide occupies 202 to 227 (DGMAAILANNQSVSFEGIIESVAELV). An N-linked (GlcNAc...) asparagine glycan is attached at Asn211.

Confined to root caps, several cell layers at the periphery of the coleorhiza and radicle, and in all cell layers of the coleoptile.

Its function is as follows. N-acetyl-D-glucosamine binding lectin. The protein is Lectin of Oryza sativa subsp. japonica (Rice).